Consider the following 174-residue polypeptide: Amino-acid acetyltransferase (174 aa).

Residues 10 to 148 (PVVRRARTSD…VFDEMCRSYD (139 aa)) form the N-acetyltransferase domain.

It belongs to the acetyltransferase family. As to quaternary structure, homodimer and homotetramer.

It carries out the reaction L-glutamate + acetyl-CoA = N-acetyl-L-glutamate + CoA + H(+). Its pathway is amino-acid biosynthesis; L-arginine biosynthesis; N(2)-acetyl-L-ornithine from L-glutamate: step 1/4. Its activity is regulated as follows. Inhibited by L-arginine. Functionally, catalyzes the conversion of L-glutamate to alpha-N-acetyl-L-glutamate. L-glutamine is a significantly better substrate compared to L-glutamate. In Mycobacterium tuberculosis (strain ATCC 25618 / H37Rv), this protein is Amino-acid acetyltransferase (argA).